A 377-amino-acid chain; its full sequence is Protein RecA (377 aa).

Position 76 to 83 (76 to 83 (GPESSGKT)) interacts with ATP. The segment at 346–377 (TNGNNGEDHEGTEPVEIEAEDAAPKKGKKGKH) is disordered.

It belongs to the RecA family.

The protein localises to the cytoplasm. In terms of biological role, can catalyze the hydrolysis of ATP in the presence of single-stranded DNA, the ATP-dependent uptake of single-stranded DNA by duplex DNA, and the ATP-dependent hybridization of homologous single-stranded DNAs. It interacts with LexA causing its activation and leading to its autocatalytic cleavage. This is Protein RecA from Bdellovibrio bacteriovorus (strain ATCC 15356 / DSM 50701 / NCIMB 9529 / HD100).